The following is a 371-amino-acid chain: Peptide chain release factor 2 (371 aa).

N5-methylglutamine is present on glutamine 253.

It belongs to the prokaryotic/mitochondrial release factor family. Post-translationally, methylated by PrmC. Methylation increases the termination efficiency of RF2.

The protein resides in the cytoplasm. In terms of biological role, peptide chain release factor 2 directs the termination of translation in response to the peptide chain termination codons UGA and UAA. The sequence is that of Peptide chain release factor 2 from Mycobacterium sp. (strain KMS).